Reading from the N-terminus, the 233-residue chain is MEKVTAIVLAAGQGKRMKSSVSKQYMLLKDKPVLYYSLKAFENSLVTDIIVVVGNDEISYVKEEIIKPYGFRKVTHVVEGGSERYLSVLNGLNKIKDSDYVLVHDGARPLIKTNTINTVISEVEEKKACIVGVASKDTVKISTHDGIIDSTPDRNQVYTIQTPQAFEYSILREAYDNLASYQGAMITDDAMIVECLNRYPIYLVQGEYTNIKITTPEDLIFAEAILREHQDFI.

Belongs to the IspD/TarI cytidylyltransferase family. IspD subfamily.

It carries out the reaction 2-C-methyl-D-erythritol 4-phosphate + CTP + H(+) = 4-CDP-2-C-methyl-D-erythritol + diphosphate. The protein operates within isoprenoid biosynthesis; isopentenyl diphosphate biosynthesis via DXP pathway; isopentenyl diphosphate from 1-deoxy-D-xylulose 5-phosphate: step 2/6. Functionally, catalyzes the formation of 4-diphosphocytidyl-2-C-methyl-D-erythritol from CTP and 2-C-methyl-D-erythritol 4-phosphate (MEP). The sequence is that of 2-C-methyl-D-erythritol 4-phosphate cytidylyltransferase from Lachnoclostridium phytofermentans (strain ATCC 700394 / DSM 18823 / ISDg) (Clostridium phytofermentans).